Here is a 354-residue protein sequence, read N- to C-terminus: Protein RecA (354 aa).

Residue 65–72 participates in ATP binding; it reads GPESSGKT.

This sequence belongs to the RecA family.

The protein resides in the cytoplasm. Functionally, can catalyze the hydrolysis of ATP in the presence of single-stranded DNA, the ATP-dependent uptake of single-stranded DNA by duplex DNA, and the ATP-dependent hybridization of homologous single-stranded DNAs. It interacts with LexA causing its activation and leading to its autocatalytic cleavage. This Vibrio cholerae serotype O1 (strain ATCC 39315 / El Tor Inaba N16961) protein is Protein RecA.